A 164-amino-acid chain; its full sequence is MD-2-related lipid-recognition protein 3 (164 aa).

An N-terminal signal peptide occupies residues 1 to 24 (MAMSHVQPMLLLLVSLFFLPALRG).

Interacts with RUB1/NEDD8. Post-translationally, neddylated. Ubiquitinated.

Its subcellular location is the vacuole. It localises to the endoplasmic reticulum. May be involved in herbivory-mediated responses. May play a role in herbivory-associated molecular pattern (HAMP) recognition. May function is jasmonate (JA) signaling in response to HAMP. May play a role in defense response against the pathogens Altenaria brassicicola and Pseudomonas syringae. The chain is MD-2-related lipid-recognition protein 3 from Arabidopsis thaliana (Mouse-ear cress).